The following is a 581-amino-acid chain: uncharacterized protein (581 aa).

This sequence belongs to the UbiD family.

This is an uncharacterized protein from Chlamydia caviae (strain ATCC VR-813 / DSM 19441 / 03DC25 / GPIC) (Chlamydophila caviae).